Reading from the N-terminus, the 483-residue chain is Trigger factor (483 aa).

A PPIase FKBP-type domain is found at 166 to 251 (TDTVNIDYVG…INDVFTKEKP (86 aa)). Basic and acidic residues predominate over residues 435–460 (GEEPKLSTTKKVVEPTEEKTRKDSKM). The disordered stretch occupies residues 435–483 (GEEPKLSTTKKVVEPTEEKTRKDSKMSTKKPAAKPAAKPAAATKKPVKK). Residues 467–483 (AKPAAKPAAATKKPVKK) show a composition bias toward low complexity.

It belongs to the FKBP-type PPIase family. Tig subfamily.

It localises to the cytoplasm. The catalysed reaction is [protein]-peptidylproline (omega=180) = [protein]-peptidylproline (omega=0). Involved in protein export. Acts as a chaperone by maintaining the newly synthesized protein in an open conformation. Functions as a peptidyl-prolyl cis-trans isomerase. This is Trigger factor from Mycoplasma mobile (strain ATCC 43663 / 163K / NCTC 11711) (Mesomycoplasma mobile).